The chain runs to 213 residues: Outer-membrane lipoprotein LolB (213 aa).

Positions 1–24 (MNNLSYFTKTKLVWVILSLSLLSA) are cleaved as a signal peptide. A lipid anchor (N-palmitoyl cysteine) is attached at cysteine 25. Cysteine 25 carries S-diacylglycerol cysteine lipidation.

The protein belongs to the LolB family. As to quaternary structure, monomer.

It localises to the cell outer membrane. Plays a critical role in the incorporation of lipoproteins in the outer membrane after they are released by the LolA protein. The protein is Outer-membrane lipoprotein LolB of Shewanella woodyi (strain ATCC 51908 / MS32).